The following is a 186-amino-acid chain: Acireductone dioxygenase (186 aa).

Positions 1 to 21 (MSRLSIFPDGSTSMDQSSPTP) are disordered. Residues 10–20 (GSTSMDQSSPT) are compositionally biased toward polar residues. Fe(2+)-binding residues include His103, His105, Glu109, and His147. Ni(2+)-binding residues include His103, His105, Glu109, and His147.

This sequence belongs to the acireductone dioxygenase (ARD) family. Monomer. The cofactor is Fe(2+). Ni(2+) is required as a cofactor.

The enzyme catalyses 1,2-dihydroxy-5-(methylsulfanyl)pent-1-en-3-one + O2 = 3-(methylsulfanyl)propanoate + CO + formate + 2 H(+). The catalysed reaction is 1,2-dihydroxy-5-(methylsulfanyl)pent-1-en-3-one + O2 = 4-methylsulfanyl-2-oxobutanoate + formate + 2 H(+). It functions in the pathway amino-acid biosynthesis; L-methionine biosynthesis via salvage pathway; L-methionine from S-methyl-5-thio-alpha-D-ribose 1-phosphate: step 5/6. Its function is as follows. Catalyzes 2 different reactions between oxygen and the acireductone 1,2-dihydroxy-3-keto-5-methylthiopentene (DHK-MTPene) depending upon the metal bound in the active site. Fe-containing acireductone dioxygenase (Fe-ARD) produces formate and 2-keto-4-methylthiobutyrate (KMTB), the alpha-ketoacid precursor of methionine in the methionine recycle pathway. Ni-containing acireductone dioxygenase (Ni-ARD) produces methylthiopropionate, carbon monoxide and formate, and does not lie on the methionine recycle pathway. This is Acireductone dioxygenase from Synechococcus sp. (strain CC9902).